A 507-amino-acid polypeptide reads, in one-letter code: Proton-coupled zinc antiporter SLC30A1 (507 aa).

At 1 to 10 (MGCWGRNRGR) the chain is on the cytoplasmic side. A helical membrane pass occupies residues 11–31 (LLCMLLLTFMFMVLEVVVSRV). Residues 32 to 35 (TASL) lie on the Extracellular side of the membrane. Residues 36–56 (AMLSDSFHMLSDVLALVVALV) form a helical membrane-spanning segment. Positions 43 and 47 each coordinate Zn(2+). Over 57–78 (AERFARRTHATQKNTFGWIRAE) the chain is Cytoplasmic. A helical transmembrane segment spans residues 79–99 (VMGALVNAIFLTGLCFAILLE). Residues 100–113 (AVERFIEPHEMQQP) lie on the Extracellular side of the membrane. Residues 114–134 (LVVLSVGVAGLLVNVLGLCLF) form a helical membrane-spanning segment. Topologically, residues 135–247 (HHHSGEGQGA…RAGQLNMRGV (113 aa)) are cytoplasmic. Residues 140–218 (EGQGAGHGHS…EKLRSDDPVD (79 aa)) are disordered. The segment at 145–156 (GHGHSHGHGHGH) is 6 X 2 AA approximate repeats of H-G. Positions 147–165 (GHSHGHGHGHLAKGARKAG) are enriched in basic residues. Polar residues predominate over residues 188–200 (TNTLVANTSNSNG). Over residues 204–215 (DQAEPEKLRSDD) the composition is skewed to basic and acidic residues. The helical transmembrane segment at 248 to 268 (FLHVLGDALGSVIVVVNALVF) threads the bilayer. His250 and Asp254 together coordinate Zn(2+). Topologically, residues 269-307 (YFSWKGCTEDDFCVNPCFPDPCKSSVELMNSTQAPMHEA) are extracellular. Residue Asn298 is glycosylated (N-linked (GlcNAc...) asparagine). A helical transmembrane segment spans residues 308 to 328 (GPCWVLYLDPTLCIIMVCILL). Residues 329-507 (YTTYPLLKES…VPNKQPESSL (179 aa)) lie on the Cytoplasmic side of the membrane. A Phosphoserine modification is found at Ser506.

The protein belongs to the cation diffusion facilitator (CDF) transporter (TC 2.A.4) family. SLC30A subfamily. In terms of assembly, homodimer. Interacts with TMEM163. Interacts and forms a complex with TMC6 and TMC8; the interaction regulates zinc transport into the ER. As to expression, widely expressed. Detected in duodenum and jejunum but not in ileum and colon (at protein level). Expressed by neuroglial cells (at protein level).

It is found in the cell membrane. It localises to the basolateral cell membrane. Its subcellular location is the cytoplasmic vesicle membrane. The protein localises to the cytoplasm. The protein resides in the endoplasmic reticulum membrane. It is found in the golgi apparatus membrane. It localises to the nucleus membrane. The enzyme catalyses Zn(2+)(in) + 2 H(+)(out) = Zn(2+)(out) + 2 H(+)(in). Its activity is regulated as follows. Calcium-dependent. In terms of biological role, zinc ion:proton antiporter that could function at the plasma membrane mediating zinc efflux from cells against its electrochemical gradient protecting them from intracellular zinc accumulation and toxicity. Alternatively, could prevent the transport to the plasma membrane of CACNB2, the L-type calcium channels regulatory subunit, through a yet to be defined mechanism. By modulating the expression of these channels at the plasma membrane, could prevent calcium and zinc influx into cells. By the same mechanism, could also prevent L-type calcium channels-mediated heavy metal influx into cells. In some cells, could also function as a zinc ion:proton antiporter mediating zinc entry into the lumen of cytoplasmic vesicles. In macrophages, can increase zinc ions concentration into the lumen of cytoplasmic vesicles containing engulfed bacteria and could help inactivate them. Forms a complex with TMC6/EVER1 and TMC8/EVER2 at the ER membrane of keratynocytes which facilitates zinc uptake into the ER. Down-regulates the activity of transcription factors induced by zinc and cytokines. In Rattus norvegicus (Rat), this protein is Proton-coupled zinc antiporter SLC30A1.